A 169-amino-acid polypeptide reads, in one-letter code: E1B protein, small T-antigen (169 aa).

The tract at residues 147 to 169 is disordered; the sequence is GSVVEEEQGEEHLARDSDDPFFD. Positions 156 to 169 are enriched in basic and acidic residues; that stretch reads EEHLARDSDDPFFD.

The protein belongs to the adenoviridae E1B 19 kDa protein family.

In Canine adenovirus serotype 1 (strain Glaxo) (CAdV-1), this protein is E1B protein, small T-antigen.